The sequence spans 443 residues: Proline--tRNA ligase (443 aa).

It belongs to the class-II aminoacyl-tRNA synthetase family. ProS type 2 subfamily. Homodimer.

It localises to the cytoplasm. The catalysed reaction is tRNA(Pro) + L-proline + ATP = L-prolyl-tRNA(Pro) + AMP + diphosphate. Functionally, catalyzes the attachment of proline to tRNA(Pro) in a two-step reaction: proline is first activated by ATP to form Pro-AMP and then transferred to the acceptor end of tRNA(Pro). This is Proline--tRNA ligase from Methylobacterium nodulans (strain LMG 21967 / CNCM I-2342 / ORS 2060).